Here is a 587-residue protein sequence, read N- to C-terminus: MKRSMYAGRVREEHIGQEITLKGWVGRRRDLGGLIFIDLRDREGIMQLVINPEKVSAEVMATAESLRSEFVIEVTGQVAAREQANDKLPTGAVELNVTALIVLNTAKTTPFEIKDGIEANDDTRLRYRYLDLRRPEMLENLKLRAKVTHSIRNYLDELEFIDVETPFLSKSTPEGARDYLVPSRVNKGHFYALPQSPQITKQLLMNAGFDRYYQIVKCFRDEDLRGDRQPEFTQVDLETSFLTEQEIQDITEGLIARVMKETKGIEVTLPFPRMKYDDAMALYGSDKPDTRFDMLLQDLTEVVKGVDFKVFSEAPAVKAIVVKGAADNYSRKDIDKMTEVAKQYGAKGLAWVKVVDGELNGPVAKFLTSIQAELTTALSLEDKDLVLFVADTLEVANATLGALRGRIAKELGLIDNDKFNFLWVVDWPMFEWSEEEGRYMSAHHPFTLPQEETAHELEGDLAKVRAIAYDIVLNGYELGGGSLRINQKDLQERMFKALGFSAEEANDQFGFLLEAMDYGFPPHGGLAIGLDRFVMLLAGEENIREVIAFPKNNKASDPMTQAPSTVALKQLEELSLQVEEDETSKTN.

E174 lines the L-aspartate pocket. An aspartate region spans residues 198–201 (QITK). R220 contacts L-aspartate. Residues 220–222 (RDE) and Q229 each bind ATP. L-aspartate is bound at residue H443. E477 contacts ATP. R484 provides a ligand contact to L-aspartate. Residue 529–532 (GLDR) participates in ATP binding.

Belongs to the class-II aminoacyl-tRNA synthetase family. Type 1 subfamily. In terms of assembly, homodimer.

The protein resides in the cytoplasm. It carries out the reaction tRNA(Asp) + L-aspartate + ATP = L-aspartyl-tRNA(Asp) + AMP + diphosphate. Functionally, catalyzes the attachment of L-aspartate to tRNA(Asp) in a two-step reaction: L-aspartate is first activated by ATP to form Asp-AMP and then transferred to the acceptor end of tRNA(Asp). The polypeptide is Aspartate--tRNA ligase (Streptococcus pneumoniae (strain Hungary19A-6)).